We begin with the raw amino-acid sequence, 324 residues long: MTINPDDLCRRIMADPEACATEDEALRLLELPAEQTLPLIACAQRIRTAHAGPAFTCAIVNARSGRCPENCSFCAQSAHYATGAPEHPMLNTAALVEHALKLADAGADRFGIVTSGTRPAPRELETVCEAVVRIRARTHLSPCASLGQLSPQAAAMLRQAGLERYHHNLETARSFFASVCTTHDYDEDIYTVKLAREAGLAVCCGGILGLGESRAQRAELSGQIKRCRADSVPVNLLTPVAGTPLERMDPLPPFEALRTIAVFRFMHPQADILVAGGREHVLGEYRSWTFISGANGLMVGNYLTTAGRSTADDYTMLRHMGVLR.

One can recognise a Radical SAM core domain in the interval 50-278 (HAGPAFTCAI…QADILVAGGR (229 aa)). 3 residues coordinate [4Fe-4S] cluster: Cys67, Cys71, and Cys74. Positions 143 and 203 each coordinate [2Fe-2S] cluster.

It belongs to the radical SAM superfamily. Biotin synthase family. Homodimer. [4Fe-4S] cluster serves as cofactor. It depends on [2Fe-2S] cluster as a cofactor.

The catalysed reaction is (4R,5S)-dethiobiotin + (sulfur carrier)-SH + 2 reduced [2Fe-2S]-[ferredoxin] + 2 S-adenosyl-L-methionine = (sulfur carrier)-H + biotin + 2 5'-deoxyadenosine + 2 L-methionine + 2 oxidized [2Fe-2S]-[ferredoxin]. It functions in the pathway cofactor biosynthesis; biotin biosynthesis; biotin from 7,8-diaminononanoate: step 2/2. Its function is as follows. Catalyzes the conversion of dethiobiotin (DTB) to biotin by the insertion of a sulfur atom into dethiobiotin via a radical-based mechanism. The chain is Biotin synthase from Oleidesulfovibrio alaskensis (strain ATCC BAA-1058 / DSM 17464 / G20) (Desulfovibrio alaskensis).